Here is a 193-residue protein sequence, read N- to C-terminus: Probable thymidylate kinase (193 aa).

7–14 (GIDGAGKT) contributes to the ATP binding site.

The protein belongs to the thymidylate kinase family.

The catalysed reaction is dTMP + ATP = dTDP + ADP. This chain is Probable thymidylate kinase (tmk), found in Thermoplasma acidophilum (strain ATCC 25905 / DSM 1728 / JCM 9062 / NBRC 15155 / AMRC-C165).